The sequence spans 443 residues: Putative transporter AmpG 1 (443 aa).

12 consecutive transmembrane segments (helical) span residues 6–26, 43–63, 74–96, 106–128, 144–164, 172–192, 255–275, 300–320, 326–346, 355–375, 394–414, and 416–436; these read HVCI…MITG, IGIL…APVF, ILGH…TSIL, VLLS…ILSA, GIYI…AIYL, KIYQ…ILVS, DISL…YRLP, VCKF…GIIM, LYSI…FILL, ILFI…TAYI, LSSM…YMVV, and FGWQ…LLIL.

The protein belongs to the major facilitator superfamily.

Its subcellular location is the cell inner membrane. This is Putative transporter AmpG 1 (ampG1) from Rickettsia typhi (strain ATCC VR-144 / Wilmington).